We begin with the raw amino-acid sequence, 459 residues long: Putrescine aminotransferase (459 aa).

Pyridoxal 5'-phosphate-binding positions include 150–151 (GT) and Gln-274. Lys-300 carries the post-translational modification N6-(pyridoxal phosphate)lysine. Thr-332 contributes to the pyridoxal 5'-phosphate binding site.

This sequence belongs to the class-III pyridoxal-phosphate-dependent aminotransferase family. Putrescine aminotransferase subfamily. Requires pyridoxal 5'-phosphate as cofactor.

The enzyme catalyses an alkane-alpha,omega-diamine + 2-oxoglutarate = an omega-aminoaldehyde + L-glutamate. The catalysed reaction is putrescine + 2-oxoglutarate = 1-pyrroline + L-glutamate + H2O. It catalyses the reaction cadaverine + 2-oxoglutarate = 5-aminopentanal + L-glutamate. The protein operates within amine and polyamine degradation; putrescine degradation; 4-aminobutanal from putrescine (transaminase route): step 1/1. Catalyzes the aminotransferase reaction from putrescine to 2-oxoglutarate, leading to glutamate and 4-aminobutanal, which spontaneously cyclizes to form 1-pyrroline. This is the first step in one of two pathways for putrescine degradation, where putrescine is converted into 4-aminobutanoate (gamma-aminobutyrate or GABA) via 4-aminobutanal. Also functions as a cadaverine transaminase in a a L-lysine degradation pathway to succinate that proceeds via cadaverine, glutarate and L-2-hydroxyglutarate. This Enterobacter sp. (strain 638) protein is Putrescine aminotransferase.